The sequence spans 513 residues: ATP synthase subunit alpha (513 aa).

Glycine 169–threonine 176 provides a ligand contact to ATP.

The protein belongs to the ATPase alpha/beta chains family. In terms of assembly, F-type ATPases have 2 components, CF(1) - the catalytic core - and CF(0) - the membrane proton channel. CF(1) has five subunits: alpha(3), beta(3), gamma(1), delta(1), epsilon(1). CF(0) has three main subunits: a(1), b(2) and c(9-12). The alpha and beta chains form an alternating ring which encloses part of the gamma chain. CF(1) is attached to CF(0) by a central stalk formed by the gamma and epsilon chains, while a peripheral stalk is formed by the delta and b chains.

Its subcellular location is the cell inner membrane. It carries out the reaction ATP + H2O + 4 H(+)(in) = ADP + phosphate + 5 H(+)(out). Produces ATP from ADP in the presence of a proton gradient across the membrane. The alpha chain is a regulatory subunit. In Francisella philomiragia subsp. philomiragia (strain ATCC 25017 / CCUG 19701 / FSC 153 / O#319-036), this protein is ATP synthase subunit alpha.